The primary structure comprises 204 residues: LexA repressor (204 aa).

The H-T-H motif DNA-binding region spans 28–48; sequence RAEIANRLGFKSANAAEEHLK. Active-site for autocatalytic cleavage activity residues include serine 121 and lysine 158.

Belongs to the peptidase S24 family. In terms of assembly, homodimer.

It carries out the reaction Hydrolysis of Ala-|-Gly bond in repressor LexA.. Its function is as follows. Represses a number of genes involved in the response to DNA damage (SOS response), including recA and lexA. In the presence of single-stranded DNA, RecA interacts with LexA causing an autocatalytic cleavage which disrupts the DNA-binding part of LexA, leading to derepression of the SOS regulon and eventually DNA repair. The chain is LexA repressor from Shewanella frigidimarina (strain NCIMB 400).